The following is a 213-amino-acid chain: Orotate phosphoribosyltransferase (213 aa).

Lys26 contributes to the 5-phospho-alpha-D-ribose 1-diphosphate binding site. 34 to 35 (FF) provides a ligand contact to orotate. 5-phospho-alpha-D-ribose 1-diphosphate is bound by residues 72-73 (YK), Arg99, Lys100, Lys103, His105, and 124-132 (DDVITAGTA). Residues Thr128 and Arg156 each coordinate orotate.

This sequence belongs to the purine/pyrimidine phosphoribosyltransferase family. PyrE subfamily. As to quaternary structure, homodimer. Mg(2+) serves as cofactor.

The catalysed reaction is orotidine 5'-phosphate + diphosphate = orotate + 5-phospho-alpha-D-ribose 1-diphosphate. The protein operates within pyrimidine metabolism; UMP biosynthesis via de novo pathway; UMP from orotate: step 1/2. Catalyzes the transfer of a ribosyl phosphate group from 5-phosphoribose 1-diphosphate to orotate, leading to the formation of orotidine monophosphate (OMP). This chain is Orotate phosphoribosyltransferase, found in Vibrio vulnificus (strain CMCP6).